A 400-amino-acid polypeptide reads, in one-letter code: Argininosuccinate synthase (400 aa).

Residues 10-18 and Ala-38 contribute to the ATP site; that span reads AYSGGVDTS. Tyr-89 is a binding site for L-citrulline. Residue Gly-119 participates in ATP binding. The L-aspartate site is built by Thr-121, Asn-125, and Asp-126. Asn-125 is a binding site for L-citrulline. Residues Arg-129, Ser-177, Ser-186, Glu-262, and Tyr-274 each coordinate L-citrulline.

This sequence belongs to the argininosuccinate synthase family. Type 1 subfamily. Homotetramer.

The protein localises to the cytoplasm. The enzyme catalyses L-citrulline + L-aspartate + ATP = 2-(N(omega)-L-arginino)succinate + AMP + diphosphate + H(+). It functions in the pathway amino-acid biosynthesis; L-arginine biosynthesis; L-arginine from L-ornithine and carbamoyl phosphate: step 2/3. In Crocosphaera subtropica (strain ATCC 51142 / BH68) (Cyanothece sp. (strain ATCC 51142)), this protein is Argininosuccinate synthase.